Here is a 743-residue protein sequence, read N- to C-terminus: Protein STB5 (743 aa).

The zn(2)-C6 fungal-type DNA-binding region spans 22-49 (CARCRKLKKKCGKQIPTCANCDKNGAHC). Disordered regions lie at residues 81–100 (VGKSPLSTKSMPNSSSPLSA) and 155–249 (NSNP…YANN). Composition is skewed to polar residues over residues 85 to 99 (PLSTKSMPNSSSPLS) and 155 to 198 (NSNP…SPLI). A compositionally biased stretch (low complexity) spans 213–238 (NNNRNTSNGDNGSNVNHDNNNGSTNT). A compositionally biased stretch (polar residues) spans 239 to 249 (PQLSLTPYANN).

Its subcellular location is the nucleus. In terms of biological role, binds to SIN3. The protein is Protein STB5 (STB5) of Saccharomyces cerevisiae (strain ATCC 204508 / S288c) (Baker's yeast).